The sequence spans 451 residues: Tubulin gamma-2 chain (451 aa).

At Ser-131 the chain carries Phosphoserine; by BRSK1. GTP is bound at residue 142 to 148 (AGGTGSG).

This sequence belongs to the tubulin family. As to quaternary structure, component of the gamma-tubulin ring complex (gTuRC) consisting of TUBGCP2, TUBGCP3, TUBGCP4, TUBGCP5 and TUBGCP6 and gamma-tubulin TUBG1 or TUBG2. TUBGCP2, TUBGCP3, TUBGCP4, TUBGCP5 and TUBGCP6 assemble in a 5:5:2:1:1 stoichiometry; each is associated with a gamma-tubulin, thereby arranging 14 gamma-tubulins in a helical manner. Gamma-tubulin at the first position is blocked by TUBGCP3 at the last position, allowing 13 protafilaments to grow into a microtubule. Interacts with alpha-beta tubulin heterodimers; the interaction allows microtubules to nucleate from the gTuRC. In terms of processing, phosphorylation at Ser-131 by BRSK1 regulates centrosome duplication, possibly by mediating relocation of gamma-tubulin and its associated proteins from the cytoplasm to the centrosome.

It localises to the cytoplasm. Its subcellular location is the cytoskeleton. The protein resides in the microtubule organizing center. It is found in the centrosome. In terms of biological role, tubulin is the major constituent of microtubules, protein filaments consisting of alpha- and beta-tubulin heterodimers. Gamma-tubulin is a key component of the gamma-tubulin ring complex (gTuRC) which mediates microtubule nucleation. The gTuRC regulates the minus-end nucleation of alpha-beta tubulin heterodimers that grow into microtubule protafilaments, a critical step in centrosome duplication and spindle formation. This is Tubulin gamma-2 chain (TUBG2) from Bos taurus (Bovine).